The sequence spans 1166 residues: Serine-aspartate repeat-containing protein E (1166 aa).

Positions 1–52 are cleaved as a signal peptide; it reads MINRDNKKAITKKGMISNRLNKFSIRKYTVGTASILVGTTLIFGLGNQEAKA. The YSIRK-G/S signaling motif motif lies at 23–34; that stretch reads FSIRKYTVGTAS. The tract at residues 53 to 606 is ligand binding A region; it reads AENTSTENAK…GDGTVKPEEK (554 aa). The interval 54-253 is disordered; it reads ENTSTENAKQ…HSTKPVATAP (200 aa). The span at 61-75 shows a compositional bias: basic and acidic residues; sequence AKQDDATTSDNKEVV. Low complexity predominate over residues 77–90; sequence ETENNSTTENNSTN. Residues 92 to 108 show a composition bias toward basic and acidic residues; the sequence is IKKETNTDSQPEAKKES. The segment covering 118-129 has biased composition (polar residues); the sequence is NNVTATTETKPQ. Residues 130-145 show a composition bias toward basic and acidic residues; it reads NIEKENVKPSTDKTAT. Over residues 166-178 the composition is skewed to low complexity; that stretch reads TTKPSTSEPSTSE. Over residues 179 to 212 the composition is skewed to polar residues; it reads IQTKPTTPQESTNIENSQPQPTPSKVDNQVTDAT. Positions 221–246 are enriched in basic and acidic residues; that stretch reads SKEELKKNPEKLKELVRNDSNTDHST. CNA-B domains lie at 607–719, 720–829, and 830–940; these read LYKI…YKEP, KYNL…YKTP, and KYSL…EEDT. The disordered stretch occupies residues 904–1141; sequence VTNTTEDDKD…TGSENNGSNN (238 aa). 2 stretches are compositionally biased toward acidic residues: residues 908 to 918 and 935 to 1105; these read TEDDKDADGGE and YFEE…DSDS. The LPXTG sorting signal motif lies at 1129–1133; it reads LPETG. A Pentaglycyl murein peptidoglycan amidated threonine modification is found at Thr1132. Residues 1133 to 1166 constitute a propeptide, removed by sortase; that stretch reads GSENNGSNNATLFGGLFAALGSLLLFGRRKKQNK.

Belongs to the serine-aspartate repeat-containing protein (SDr) family. Interacts with host complement factor H/CFAH (via C-terminus). Interacts with host complement regulator C4BPA.

The protein resides in the secreted. It is found in the cell wall. Cell surface-associated calcium-binding protein which plays an important role in adhesion and pathogenesis. Contributes to the resistance to killing by innate immune components in blood and thus attenuates bacterial clearance by interacting with host complement factor H/CFAH and modulating its activity. Also inhibits bacterial opsonization and killing by interacting with host complement regulator C4BPA and thus inhibiting classical complement pathway activation. The protein is Serine-aspartate repeat-containing protein E (sdrE) of Staphylococcus aureus (strain COL).